The following is a 219-amino-acid chain: Cytidylate kinase (219 aa).

11 to 19 (GPAGVGKTT) provides a ligand contact to ATP.

Belongs to the cytidylate kinase family. Type 1 subfamily.

It localises to the cytoplasm. The catalysed reaction is CMP + ATP = CDP + ADP. The enzyme catalyses dCMP + ATP = dCDP + ADP. The protein is Cytidylate kinase of Oleidesulfovibrio alaskensis (strain ATCC BAA-1058 / DSM 17464 / G20) (Desulfovibrio alaskensis).